A 469-amino-acid chain; its full sequence is Tryptophan biosynthesis protein TrpCF (469 aa).

The tract at residues 1-271 (MSEQLSEHIS…LAVRKIVLGE (271 aa)) is indole-3-glycerol phosphate synthase. The segment at 272 to 469 (HKVCGLTHPD…QQVFQQLRNY (198 aa)) is N-(5'-phosphoribosyl)anthranilate isomerase.

The protein in the N-terminal section; belongs to the TrpC family. In the C-terminal section; belongs to the TrpF family. Monomer.

It carries out the reaction N-(5-phospho-beta-D-ribosyl)anthranilate = 1-(2-carboxyphenylamino)-1-deoxy-D-ribulose 5-phosphate. The catalysed reaction is 1-(2-carboxyphenylamino)-1-deoxy-D-ribulose 5-phosphate + H(+) = (1S,2R)-1-C-(indol-3-yl)glycerol 3-phosphate + CO2 + H2O. It participates in amino-acid biosynthesis; L-tryptophan biosynthesis; L-tryptophan from chorismate: step 3/5. It functions in the pathway amino-acid biosynthesis; L-tryptophan biosynthesis; L-tryptophan from chorismate: step 4/5. Bifunctional enzyme that catalyzes two sequential steps of tryptophan biosynthetic pathway. The first reaction is catalyzed by the isomerase, coded by the TrpF domain; the second reaction is catalyzed by the synthase, coded by the TrpC domain. The chain is Tryptophan biosynthesis protein TrpCF (trpCF) from Vibrio cholerae serotype O1 (strain ATCC 39315 / El Tor Inaba N16961).